A 266-amino-acid polypeptide reads, in one-letter code: uncharacterized protein (266 aa).

It belongs to the chlamydial CPn_0087/CT3_09/TC_0583 family.

This is an uncharacterized protein from Chlamydia muridarum (strain MoPn / Nigg).